An 805-amino-acid chain; its full sequence is DNA gyrase subunit B (805 aa).

In terms of domain architecture, Toprim spans 431 to 546 (CEMYIVEGDS…NECVYIAQPP (116 aa)). Glu-437, Asp-511, and Asp-513 together coordinate Mg(2+).

Belongs to the type II topoisomerase GyrB family. As to quaternary structure, heterotetramer, composed of two GyrA and two GyrB chains. In the heterotetramer, GyrA contains the active site tyrosine that forms a transient covalent intermediate with DNA, while GyrB binds cofactors and catalyzes ATP hydrolysis. Mg(2+) serves as cofactor. Requires Mn(2+) as cofactor. Ca(2+) is required as a cofactor.

Its subcellular location is the cytoplasm. It catalyses the reaction ATP-dependent breakage, passage and rejoining of double-stranded DNA.. In terms of biological role, a type II topoisomerase that negatively supercoils closed circular double-stranded (ds) DNA in an ATP-dependent manner to modulate DNA topology and maintain chromosomes in an underwound state. Negative supercoiling favors strand separation, and DNA replication, transcription, recombination and repair, all of which involve strand separation. Also able to catalyze the interconversion of other topological isomers of dsDNA rings, including catenanes and knotted rings. Type II topoisomerases break and join 2 DNA strands simultaneously in an ATP-dependent manner. In Chlamydia pneumoniae (Chlamydophila pneumoniae), this protein is DNA gyrase subunit B.